We begin with the raw amino-acid sequence, 329 residues long: DNA-directed RNA polymerase subunit alpha (329 aa).

The alpha N-terminal domain (alpha-NTD) stretch occupies residues 1–231; sequence MQTNLLKPKT…EQLAVFAQLE (231 aa). The alpha C-terminal domain (alpha-CTD) stretch occupies residues 249–329; the sequence is FDPILLRPVD…SWPPAGLDKR (81 aa).

This sequence belongs to the RNA polymerase alpha chain family. In terms of assembly, homodimer. The RNAP catalytic core consists of 2 alpha, 1 beta, 1 beta' and 1 omega subunit. When a sigma factor is associated with the core the holoenzyme is formed, which can initiate transcription.

It carries out the reaction RNA(n) + a ribonucleoside 5'-triphosphate = RNA(n+1) + diphosphate. In terms of biological role, DNA-dependent RNA polymerase catalyzes the transcription of DNA into RNA using the four ribonucleoside triphosphates as substrates. In Polaromonas sp. (strain JS666 / ATCC BAA-500), this protein is DNA-directed RNA polymerase subunit alpha.